Reading from the N-terminus, the 78-residue chain is Acyl carrier protein (78 aa).

In terms of domain architecture, Carrier spans 2–77; the sequence is SDIAERVKKI…DAVKFIEKAQ (76 aa). An O-(pantetheine 4'-phosphoryl)serine modification is found at S37.

This sequence belongs to the acyl carrier protein (ACP) family. 4'-phosphopantetheine is transferred from CoA to a specific serine of apo-ACP by AcpS. This modification is essential for activity because fatty acids are bound in thioester linkage to the sulfhydryl of the prosthetic group.

The protein localises to the cytoplasm. It participates in lipid metabolism; fatty acid biosynthesis. In terms of biological role, carrier of the growing fatty acid chain in fatty acid biosynthesis. The protein is Acyl carrier protein of Rhizobium etli (strain CIAT 652).